A 1308-amino-acid polypeptide reads, in one-letter code: Cadherin-related family member 2 (1308 aa).

The signal sequence occupies residues 1 to 20 (MAWLWLLCALLPAFMVSVTA). Residues 21 to 1152 (NSPPSFGVNM…EPDQQKLLTS (1132 aa)) lie on the Extracellular side of the membrane. Cadherin domains lie at 33-124 (VTLP…IPVF), 125-241 (LNTE…DPRF), 242-353 (IREF…KPEF), 368-480 (AQVN…RPVF), 481-586 (SQSL…PPVV), 586-695 (VRGS…LPVF), 695-807 (FNQS…PPTL), 809-927 (AASL…APYF), and 929-1051 (PNNQ…RLQF). Residues 1153–1173 (VIIGLVVSLVLVLVILITALV) traverse the membrane as a helical segment. The Cytoplasmic portion of the chain corresponds to 1174 to 1308 (CLRKSYHRKL…TNPGLDTTDL (135 aa)). The interval 1178–1308 (SYHRKLRAMK…TNPGLDTTDL (131 aa)) is mediates interaction with USH1C and MYO7B and is required for proper localization to microvilli tips and function in microvilli organization. Ser1245 is modified (phosphoserine). The tract at residues 1251-1308 (VDLDMDSKEFKRKDLPGDPPEPDPEPLTAVLSGRSAGASEQQKKNLSFTNPGLDTTDL) is disordered. A compositionally biased stretch (basic and acidic residues) spans 1255-1266 (MDSKEFKRKDLP). The span at 1288-1308 (ASEQQKKNLSFTNPGLDTTDL) shows a compositional bias: polar residues. Phosphoserine is present on Ser1297.

As to quaternary structure, part of the IMAC/intermicrovillar adhesion complex/intermicrovillar tip-link complex composed of ANKS4B, MYO7B, USH1C, CDHR2 and CDHR5. Interacts with MAST2. Interacts (via cytoplasmic domain) with USH1C and MYO7B; required for proper localization of CDHR2 to microvilli tips and its function in brush border differentiation.

Its subcellular location is the apical cell membrane. It localises to the cell projection. The protein localises to the microvillus membrane. It is found in the cell junction. Its function is as follows. Intermicrovillar adhesion molecule that forms, via its extracellular domain, calcium-dependent heterophilic complexes with CDHR5 on adjacent microvilli. Thereby, controls the packing of microvilli at the apical membrane of epithelial cells. Through its cytoplasmic domain, interacts with microvillus cytoplasmic proteins to form the intermicrovillar adhesion complex/IMAC. This complex plays a central role in microvilli and epithelial brush border differentiation. May also play a role in cell-cell adhesion and contact inhibition in epithelial cells. This is Cadherin-related family member 2 from Mus musculus (Mouse).